Here is a 922-residue protein sequence, read N- to C-terminus: Ubiquitin carboxyl-terminal hydrolase 29 (922 aa).

Residues 160–196 (GILENQGGKGQNTLSSDVQTNEDILKEDNPVPNKKYK) form a disordered region. A compositionally biased stretch (polar residues) spans 170–181 (QNTLSSDVQTNE). One can recognise a USP domain in the interval 285–885 (QGFPNLGNTC…SGYIFFYMHN (601 aa)). Residue cysteine 294 is the Nucleophile of the active site. The Proton acceptor role is filled by histidine 840.

It belongs to the peptidase C19 family.

It localises to the cytoplasm. The protein resides in the perinuclear region. The enzyme catalyses Thiol-dependent hydrolysis of ester, thioester, amide, peptide and isopeptide bonds formed by the C-terminal Gly of ubiquitin (a 76-residue protein attached to proteins as an intracellular targeting signal).. In terms of biological role, deubiquitinase involved in innate antiviral immunity by mediating 'Lys-48'-linked deubiquitination of CGAS, thereby promoting its stabilization. The chain is Ubiquitin carboxyl-terminal hydrolase 29 from Homo sapiens (Human).